The chain runs to 59 residues: Large ribosomal subunit protein uL30 (59 aa).

The protein belongs to the universal ribosomal protein uL30 family. As to quaternary structure, part of the 50S ribosomal subunit.

This Clostridium botulinum (strain Alaska E43 / Type E3) protein is Large ribosomal subunit protein uL30.